Here is a 109-residue protein sequence, read N- to C-terminus: Thiosulfate sulfurtransferase GlpE (109 aa).

The region spanning 17-105 (HQQTAVLVDI…WHRHFPAEVA (89 aa)) is the Rhodanese domain. The active-site Cysteine persulfide intermediate is the cysteine 65.

The protein belongs to the GlpE family.

Its subcellular location is the cytoplasm. It catalyses the reaction thiosulfate + hydrogen cyanide = thiocyanate + sulfite + 2 H(+). The catalysed reaction is thiosulfate + [thioredoxin]-dithiol = [thioredoxin]-disulfide + hydrogen sulfide + sulfite + 2 H(+). In terms of biological role, transferase that catalyzes the transfer of sulfur from thiosulfate to thiophilic acceptors such as cyanide or dithiols. May function in a CysM-independent thiosulfate assimilation pathway by catalyzing the conversion of thiosulfate to sulfite, which can then be used for L-cysteine biosynthesis. The chain is Thiosulfate sulfurtransferase GlpE from Klebsiella pneumoniae (strain 342).